The primary structure comprises 163 residues: Probable chemoreceptor glutamine deamidase CheD (163 aa).

It belongs to the CheD family.

It catalyses the reaction L-glutaminyl-[protein] + H2O = L-glutamyl-[protein] + NH4(+). Probably deamidates glutamine residues to glutamate on methyl-accepting chemotaxis receptors (MCPs), playing an important role in chemotaxis. This chain is Probable chemoreceptor glutamine deamidase CheD, found in Borreliella afzelii (strain PKo) (Borrelia afzelii).